Here is a 700-residue protein sequence, read N- to C-terminus: Elongation factor G 2 (700 aa).

Residues 8–290 enclose the tr-type G domain; sequence ERYRNIGISA…AVVDYLPSPI (283 aa). GTP contacts are provided by residues 17–24, 88–92, and 142–145; these read AHIDAGKT, DTPGH, and NKMD.

It belongs to the TRAFAC class translation factor GTPase superfamily. Classic translation factor GTPase family. EF-G/EF-2 subfamily.

The protein localises to the cytoplasm. Catalyzes the GTP-dependent ribosomal translocation step during translation elongation. During this step, the ribosome changes from the pre-translocational (PRE) to the post-translocational (POST) state as the newly formed A-site-bound peptidyl-tRNA and P-site-bound deacylated tRNA move to the P and E sites, respectively. Catalyzes the coordinated movement of the two tRNA molecules, the mRNA and conformational changes in the ribosome. This is Elongation factor G 2 (fusB) from Ralstonia nicotianae (strain ATCC BAA-1114 / GMI1000) (Ralstonia solanacearum).